A 233-amino-acid polypeptide reads, in one-letter code: LexA repressor (233 aa).

A DNA-binding region (H-T-H motif) is located at residues 26-46 (FEEMKEALDLKSKSGVHRLIS). Residues Ser-153 and Lys-191 each act as for autocatalytic cleavage activity in the active site.

It belongs to the peptidase S24 family. Homodimer.

It catalyses the reaction Hydrolysis of Ala-|-Gly bond in repressor LexA.. In terms of biological role, represses a number of genes involved in the response to DNA damage (SOS response), including recA and lexA. In the presence of single-stranded DNA, RecA interacts with LexA causing an autocatalytic cleavage which disrupts the DNA-binding part of LexA, leading to derepression of the SOS regulon and eventually DNA repair. The chain is LexA repressor from Erythrobacter litoralis (strain HTCC2594).